The chain runs to 226 residues: Large ribosomal subunit protein uL3 (226 aa).

It belongs to the universal ribosomal protein uL3 family. In terms of assembly, part of the 50S ribosomal subunit. Forms a cluster with proteins L14 and L19.

One of the primary rRNA binding proteins, it binds directly near the 3'-end of the 23S rRNA, where it nucleates assembly of the 50S subunit. The sequence is that of Large ribosomal subunit protein uL3 from Sulfurihydrogenibium sp. (strain YO3AOP1).